The chain runs to 494 residues: Sucrose-6-phosphate hydrolase (494 aa).

Residues leucine 45 to aspartate 48, glutamine 64, tyrosine 107 to serine 108, arginine 168 to aspartate 169, and glutamate 223 each bind substrate. Residue aspartate 48 is part of the active site.

The protein belongs to the glycosyl hydrolase 32 family.

It carries out the reaction Hydrolysis of terminal non-reducing beta-D-fructofuranoside residues in beta-D-fructofuranosides.. Its pathway is glycan biosynthesis; sucrose metabolism. The chain is Sucrose-6-phosphate hydrolase (scrB) from Staphylococcus xylosus.